The chain runs to 315 residues: Ribosomal RNA small subunit methyltransferase H (315 aa).

Residues 37–39, D57, F83, D105, and Q112 contribute to the S-adenosyl-L-methionine site; that span reads GGH.

Belongs to the methyltransferase superfamily. RsmH family.

The protein localises to the cytoplasm. It carries out the reaction cytidine(1402) in 16S rRNA + S-adenosyl-L-methionine = N(4)-methylcytidine(1402) in 16S rRNA + S-adenosyl-L-homocysteine + H(+). In terms of biological role, specifically methylates the N4 position of cytidine in position 1402 (C1402) of 16S rRNA. The chain is Ribosomal RNA small subunit methyltransferase H from Pseudomonas putida (strain W619).